A 485-amino-acid chain; its full sequence is GlcNAc-binding protein A (485 aa).

A signal peptide spans 1–29 (MKKQPQKTLLAIALSVVSGTAMSHGYVSA). Positions 30 to 200 (VENGVAEARV…SFYNVIDVKF (171 aa)) constitute a Chitin-binding type-4 domain. One can recognise a Chitin-binding type-3 domain in the interval 437-478 (AGTKVLASDGAIYQCKPFPYSGYCVQWTPTATQYQPGTGSHW).

Belongs to the GbpA family.

Its subcellular location is the secreted. Probably interacts with GlcNAc residues. May promote attachment to both epithelial cell surfaces and chitin. The polypeptide is GlcNAc-binding protein A (Vibrio vulnificus (strain YJ016)).